A 151-amino-acid polypeptide reads, in one-letter code: Large ribosomal subunit protein uL13 (151 aa).

Belongs to the universal ribosomal protein uL13 family. In terms of assembly, part of the 50S ribosomal subunit.

In terms of biological role, this protein is one of the early assembly proteins of the 50S ribosomal subunit, although it is not seen to bind rRNA by itself. It is important during the early stages of 50S assembly. This chain is Large ribosomal subunit protein uL13, found in Rippkaea orientalis (strain PCC 8801 / RF-1) (Cyanothece sp. (strain PCC 8801)).